The primary structure comprises 258 residues: Acetylglutamate kinase (258 aa).

Residues 41 to 42 (GG), R63, and N156 each bind substrate.

The protein belongs to the acetylglutamate kinase family. ArgB subfamily.

The protein resides in the cytoplasm. The catalysed reaction is N-acetyl-L-glutamate + ATP = N-acetyl-L-glutamyl 5-phosphate + ADP. Its pathway is amino-acid biosynthesis; L-arginine biosynthesis; N(2)-acetyl-L-ornithine from L-glutamate: step 2/4. Catalyzes the ATP-dependent phosphorylation of N-acetyl-L-glutamate. This Bacillus licheniformis (strain ATCC 14580 / DSM 13 / JCM 2505 / CCUG 7422 / NBRC 12200 / NCIMB 9375 / NCTC 10341 / NRRL NRS-1264 / Gibson 46) protein is Acetylglutamate kinase.